The following is a 435-amino-acid chain: Nucleosome assembly protein 1 (435 aa).

The disordered stretch occupies residues methionine 1 to glycine 51. Serine 16 is subject to Phosphoserine. The span at proline 19 to aspartate 50 shows a compositional bias: polar residues. Phosphothreonine is present on residues threonine 20 and threonine 24. The residue at position 27 (serine 27) is a Phosphoserine. Threonine 29 carries the post-translational modification Phosphothreonine. Residues serine 31 and serine 35 each carry the phosphoserine modification. Threonine 42 bears the Phosphothreonine mark. The residue at position 46 (serine 46) is a Phosphoserine. Threonine 52 is subject to Phosphothreonine. 2 stretches are compositionally biased toward acidic residues: residues proline 146–glutamine 185 and glutamate 338–leucine 355. 2 disordered regions span residues proline 146–isoleucine 187 and glutamate 308–glutamine 435. Over residues glutamate 356–isoleucine 374 the composition is skewed to basic and acidic residues. Residues valine 386–alanine 421 are compositionally biased toward acidic residues.

Belongs to the nucleosome assembly protein (NAP) family. Component of the GIN4 complex which forms a ring at the bud neck. Post-translationally, phosphorylation is cell cycle dependent and is important for its bud neck localization. Phosphorylation is highest in newly collected G1 cells, declines when the cells are traversing through the G1 phase, and reaches the lowest level around the time of bud emergence. Phosphorylation increases and remains high through the rest of the cell cycle until the beginning of the next one, when it decreases again. Phosphorylation involves two septin ring-associated kinases, CLA4 and GIN4, and its dephosphorylation occurs at the septin ring in a manner dependent on the phosphatases PP2A and CDC14.

The protein localises to the bud neck. It is found in the bud tip. Acidic protein, which assembles histones into an octamer. Involved in the regulation of the localization and the function of the septins during mitosis. The sequence is that of Nucleosome assembly protein 1 (NAP1) from Candida albicans (strain SC5314 / ATCC MYA-2876) (Yeast).